A 157-amino-acid chain; its full sequence is Protein Smg (157 aa).

This sequence belongs to the Smg family.

The sequence is that of Protein Smg from Yersinia pestis (strain Pestoides F).